The sequence spans 150 residues: Large ribosomal subunit protein bL9 (150 aa).

It belongs to the bacterial ribosomal protein bL9 family.

Binds to the 23S rRNA. The chain is Large ribosomal subunit protein bL9 from Albidiferax ferrireducens (strain ATCC BAA-621 / DSM 15236 / T118) (Rhodoferax ferrireducens).